A 266-amino-acid polypeptide reads, in one-letter code: Glycine--tRNA ligase beta subunit (266 aa).

The protein belongs to the class-II aminoacyl-tRNA synthetase family. Tetramer of two alpha and two beta subunits.

It is found in the cytoplasm. The catalysed reaction is tRNA(Gly) + glycine + ATP = glycyl-tRNA(Gly) + AMP + diphosphate. The sequence is that of Glycine--tRNA ligase beta subunit (glyS) from Moraxella catarrhalis (Branhamella catarrhalis).